A 583-amino-acid chain; its full sequence is Chromosomal replication initiator protein DnaA (583 aa).

The interval 1-91 (MSNSNFSIEE…KHVLKTRLDL (91 aa)) is domain I, interacts with DnaA modulators. Residues 91–241 (LSVSLAITST…SFNDGLDGES (151 aa)) form a domain II region. Residues 151 to 239 (KAEQRDGASQ…SSSFNDGLDG (89 aa)) are disordered. A compositionally biased stretch (basic and acidic residues) spans 172–182 (EAARRREHDAD). The segment at 242-458 (LLNKNYTFEN…GALIRVTAYC (217 aa)) is domain III, AAA+ region. ATP is bound by residues glycine 286, glycine 288, lysine 289, and threonine 290. Positions 459-583 (ALSHEPLTVE…TQKIKSHARD (125 aa)) are domain IV, binds dsDNA.

It belongs to the DnaA family. Oligomerizes as a right-handed, spiral filament on DNA at oriC.

It is found in the cytoplasm. Functionally, plays an essential role in the initiation and regulation of chromosomal replication. ATP-DnaA binds to the origin of replication (oriC) to initiate formation of the DNA replication initiation complex once per cell cycle. Binds the DnaA box (a 9 base pair repeat at the origin) and separates the double-stranded (ds)DNA. Forms a right-handed helical filament on oriC DNA; dsDNA binds to the exterior of the filament while single-stranded (ss)DNA is stabiized in the filament's interior. The ATP-DnaA-oriC complex binds and stabilizes one strand of the AT-rich DNA unwinding element (DUE), permitting loading of DNA polymerase. After initiation quickly degrades to an ADP-DnaA complex that is not apt for DNA replication. Binds acidic phospholipids. The chain is Chromosomal replication initiator protein DnaA from Corynebacterium jeikeium (strain K411).